Reading from the N-terminus, the 405-residue chain is Na(+)-translocating NADH-quinone reductase subunit F (405 aa).

A helical membrane pass occupies residues 3–23 (IILGIVMFTVIVLVLALMILF). The 2Fe-2S ferredoxin-type domain occupies 32-124 (GDITIKVNGE…DMDIEVPEEV (93 aa)). [2Fe-2S] cluster-binding residues include cysteine 67, cysteine 73, cysteine 76, and cysteine 108. In terms of domain architecture, FAD-binding FR-type spans 127–267 (VKKWECTVIS…SGPFGEFFAK (141 aa)). The interval 270–387 (DAEMVFIGGG…PIMNQSVIKM (118 aa)) is catalytic.

Belongs to the NqrF family. As to quaternary structure, composed of six subunits; NqrA, NqrB, NqrC, NqrD, NqrE and NqrF. It depends on [2Fe-2S] cluster as a cofactor. The cofactor is FAD.

Its subcellular location is the cell inner membrane. The catalysed reaction is a ubiquinone + n Na(+)(in) + NADH + H(+) = a ubiquinol + n Na(+)(out) + NAD(+). Its function is as follows. NQR complex catalyzes the reduction of ubiquinone-1 to ubiquinol by two successive reactions, coupled with the transport of Na(+) ions from the cytoplasm to the periplasm. The first step is catalyzed by NqrF, which accepts electrons from NADH and reduces ubiquinone-1 to ubisemiquinone by a one-electron transfer pathway. The chain is Na(+)-translocating NADH-quinone reductase subunit F from Neisseria meningitidis serogroup B (strain ATCC BAA-335 / MC58).